A 249-amino-acid chain; its full sequence is MKAQVLTLTGSVAHEIELPPVFSSEFRPDLIKKAVIAQQSRRYQPHGAYVYAGITASAVGWGSGRGVSHVPRLKNSSRAAKVPQAKGGREAHPPKVEKVLIRNINQKEKRKALNSAIAATISPELVRSRGHVFTGSLPYVLSGDFESLKKTKEVIAALRAVGVYGDVERAERSRKVRAGRGKLRGRRYKQRKSLLIVTGKERLRAARNLAGVDVCLVDNLNVELLAPGTHSARLTLWTEDAVRKLGGEQ.

Belongs to the universal ribosomal protein uL4 family. Part of the 50S ribosomal subunit.

Its function is as follows. One of the primary rRNA binding proteins, this protein initially binds near the 5'-end of the 23S rRNA. It is important during the early stages of 50S assembly. It makes multiple contacts with different domains of the 23S rRNA in the assembled 50S subunit and ribosome. In terms of biological role, forms part of the polypeptide exit tunnel. The polypeptide is Large ribosomal subunit protein uL4 (Methanospirillum hungatei JF-1 (strain ATCC 27890 / DSM 864 / NBRC 100397 / JF-1)).